The sequence spans 572 residues: Proline dehydrogenase 1, mitochondrial (572 aa).

Over residues 105-124 the composition is skewed to low complexity; the sequence is NHSNQTNNVNNKNYNNNNNN. The disordered stretch occupies residues 105–140; the sequence is NHSNQTNNVNNKNYNNNNNNFEKDDKFGPPNNQNNN.

This sequence belongs to the proline oxidase family. The cofactor is FAD.

Its subcellular location is the mitochondrion matrix. It carries out the reaction L-proline + a quinone = (S)-1-pyrroline-5-carboxylate + a quinol + H(+). It participates in amino-acid degradation; L-proline degradation into L-glutamate; L-glutamate from L-proline: step 1/2. Its function is as follows. Converts proline to delta-1-pyrroline-5-carboxylate. The polypeptide is Proline dehydrogenase 1, mitochondrial (prodh) (Dictyostelium discoideum (Social amoeba)).